Consider the following 430-residue polypeptide: Enolase (430 aa).

Glutamine 167 serves as a coordination point for (2R)-2-phosphoglycerate. Residue glutamate 209 is the Proton donor of the active site. Positions 246, 287, and 314 each coordinate Mg(2+). Lysine 339, arginine 368, and serine 369 together coordinate (2R)-2-phosphoglycerate. Lysine 339 acts as the Proton acceptor in catalysis.

This sequence belongs to the enolase family. Mg(2+) is required as a cofactor.

It localises to the cytoplasm. It is found in the secreted. Its subcellular location is the cell surface. The enzyme catalyses (2R)-2-phosphoglycerate = phosphoenolpyruvate + H2O. It functions in the pathway carbohydrate degradation; glycolysis; pyruvate from D-glyceraldehyde 3-phosphate: step 4/5. Its function is as follows. Catalyzes the reversible conversion of 2-phosphoglycerate (2-PG) into phosphoenolpyruvate (PEP). It is essential for the degradation of carbohydrates via glycolysis. The protein is Enolase of Synechococcus sp. (strain ATCC 27144 / PCC 6301 / SAUG 1402/1) (Anacystis nidulans).